Here is a 106-residue protein sequence, read N- to C-terminus: Cell division protein FtsB (106 aa).

The Cytoplasmic segment spans residues 1–3 (MGK). The helical transmembrane segment at 4-21 (LTLLLLVLLGWLQYSLWL) threads the bilayer. The Periplasmic portion of the chain corresponds to 22–106 (GKNGIHDFVR…GTPSTQNNAQ (85 aa)). Residues 31–62 (RVKEDVAAQEANNSTLKARNDQLFAEIDDLNG) adopt a coiled-coil conformation.

It belongs to the FtsB family. As to quaternary structure, part of a complex composed of FtsB, FtsL and FtsQ.

It is found in the cell inner membrane. In terms of biological role, essential cell division protein. May link together the upstream cell division proteins, which are predominantly cytoplasmic, with the downstream cell division proteins, which are predominantly periplasmic. This is Cell division protein FtsB from Yersinia pseudotuberculosis serotype O:1b (strain IP 31758).